The primary structure comprises 447 residues: Exodeoxyribonuclease 7 large subunit (447 aa).

The protein belongs to the XseA family. As to quaternary structure, heterooligomer composed of large and small subunits.

Its subcellular location is the cytoplasm. It catalyses the reaction Exonucleolytic cleavage in either 5'- to 3'- or 3'- to 5'-direction to yield nucleoside 5'-phosphates.. Bidirectionally degrades single-stranded DNA into large acid-insoluble oligonucleotides, which are then degraded further into small acid-soluble oligonucleotides. The chain is Exodeoxyribonuclease 7 large subunit from Geobacter sulfurreducens (strain ATCC 51573 / DSM 12127 / PCA).